The following is a 560-amino-acid chain: DNA ligase B (560 aa).

Lysine 124 functions as the N6-AMP-lysine intermediate in the catalytic mechanism.

It belongs to the NAD-dependent DNA ligase family. LigB subfamily.

The enzyme catalyses NAD(+) + (deoxyribonucleotide)n-3'-hydroxyl + 5'-phospho-(deoxyribonucleotide)m = (deoxyribonucleotide)n+m + AMP + beta-nicotinamide D-nucleotide.. Its function is as follows. Catalyzes the formation of phosphodiester linkages between 5'-phosphoryl and 3'-hydroxyl groups in double-stranded DNA using NAD as a coenzyme and as the energy source for the reaction. This Escherichia coli (strain ATCC 8739 / DSM 1576 / NBRC 3972 / NCIMB 8545 / WDCM 00012 / Crooks) protein is DNA ligase B.